The following is a 165-amino-acid chain: Thiol peroxidase (165 aa).

Residues 18–165 form the Thioredoxin domain; it reads PAVGSPAPAF…YEAALAALGA (148 aa). The active-site Cysteine sulfenic acid (-SOH) intermediate is C60. C60 and C93 form a disulfide bridge.

This sequence belongs to the peroxiredoxin family. Tpx subfamily. In terms of assembly, homodimer.

It catalyses the reaction a hydroperoxide + [thioredoxin]-dithiol = an alcohol + [thioredoxin]-disulfide + H2O. Functionally, thiol-specific peroxidase that catalyzes the reduction of hydrogen peroxide and organic hydroperoxides to water and alcohols, respectively. Plays a role in cell protection against oxidative stress by detoxifying peroxides. This is Thiol peroxidase from Mycobacterium bovis (strain ATCC BAA-935 / AF2122/97).